An 891-amino-acid chain; its full sequence is DNA mismatch repair protein MutS (891 aa).

646–653 (GPNMAGKS) serves as a coordination point for ATP.

Belongs to the DNA mismatch repair MutS family.

Functionally, this protein is involved in the repair of mismatches in DNA. It is possible that it carries out the mismatch recognition step. This protein has a weak ATPase activity. The polypeptide is DNA mismatch repair protein MutS (Rickettsia massiliae (strain Mtu5)).